Consider the following 339-residue polypeptide: Heme A synthase (339 aa).

8 consecutive transmembrane segments (helical) span residues 7 to 27 (VIIW…VGGI), 92 to 112 (HRFI…YFLI), 126 to 146 (ILLG…KSGL), 159 to 179 (LHLT…LDLI), 199 to 219 (AIII…AGLI), 254 to 274 (VQFV…FLTF), 291 to 311 (ALLI…LYSV), and 312 to 332 (PLWL…TTTY). His258 contributes to the heme binding site. His319 serves as a coordination point for heme.

This sequence belongs to the COX15/CtaA family. Type 2 subfamily. As to quaternary structure, interacts with CtaB. The cofactor is heme b.

The protein localises to the cell membrane. It catalyses the reaction Fe(II)-heme o + 2 A + H2O = Fe(II)-heme a + 2 AH2. It participates in porphyrin-containing compound metabolism; heme A biosynthesis; heme A from heme O: step 1/1. Its function is as follows. Catalyzes the conversion of heme O to heme A by two successive hydroxylations of the methyl group at C8. The first hydroxylation forms heme I, the second hydroxylation results in an unstable dihydroxymethyl group, which spontaneously dehydrates, resulting in the formyl group of heme A. This chain is Heme A synthase, found in Flavobacterium psychrophilum (strain ATCC 49511 / DSM 21280 / CIP 103535 / JIP02/86).